The following is a 173-amino-acid chain: Translation initiation factor IF-3 (173 aa).

Belongs to the IF-3 family. Monomer.

The protein resides in the cytoplasm. Its function is as follows. IF-3 binds to the 30S ribosomal subunit and shifts the equilibrium between 70S ribosomes and their 50S and 30S subunits in favor of the free subunits, thus enhancing the availability of 30S subunits on which protein synthesis initiation begins. The protein is Translation initiation factor IF-3 of Lactiplantibacillus plantarum (strain ATCC BAA-793 / NCIMB 8826 / WCFS1) (Lactobacillus plantarum).